A 580-amino-acid polypeptide reads, in one-letter code: UPF0329 protein ECU06_0080 (580 aa).

The segment covering R308–A330 has biased composition (basic and acidic residues). The segment at R308 to R384 is disordered. Residues K331–S340 show a composition bias toward basic residues. Over residues S351–E363 the composition is skewed to acidic residues. A compositionally biased stretch (basic residues) spans A372–R384.

The protein belongs to the UPF0329 family.

The polypeptide is UPF0329 protein ECU06_0080 (Encephalitozoon cuniculi (strain GB-M1) (Microsporidian parasite)).